A 204-amino-acid polypeptide reads, in one-letter code: Small ribosomal subunit protein uS4 (204 aa).

A disordered region spans residues 25-45 (AVPSRRAYPPGQHGQARKKRS). The 61-residue stretch at 92-152 (MRLDNIIFRL…NKENSRRLAE (61 aa)) folds into the S4 RNA-binding domain.

The protein belongs to the universal ribosomal protein uS4 family. In terms of assembly, part of the 30S ribosomal subunit. Contacts protein S5. The interaction surface between S4 and S5 is involved in control of translational fidelity.

One of the primary rRNA binding proteins, it binds directly to 16S rRNA where it nucleates assembly of the body of the 30S subunit. Functionally, with S5 and S12 plays an important role in translational accuracy. The chain is Small ribosomal subunit protein uS4 from Cyanothece sp. (strain PCC 7425 / ATCC 29141).